The following is a 605-amino-acid chain: Pescadillo homolog (605 aa).

The region spanning 346–440 is the BRCT domain; the sequence is PVATLFSEFV…ELVPANLYLP (95 aa). Positions 449 to 553 are disordered; that stretch reads SPWGDSTGYD…RKATEEEEEK (105 aa). The segment covering 461 to 508 has biased composition (acidic residues); it reads AENDEDVEGSDAEEIDESADEDAESEEVEEDDTAAVALNEDDEDDEDE. Over residues 526–537 the composition is skewed to basic and acidic residues; the sequence is EAKDVIDSESSD. Residues 533–605 adopt a coiled-coil conformation; the sequence is SESSDKKKKK…KAKLAKLDKK (73 aa).

Belongs to the pescadillo family. In terms of assembly, component of the NOP7 complex, composed of ERB1, NOP7 and YTM1. The complex is held together by ERB1, which interacts with NOP7 via its N-terminal domain and with YTM1 via a high-affinity interaction between the seven-bladed beta-propeller domains of the 2 proteins. The NOP7 complex associates with the 66S pre-ribosome.

Its subcellular location is the nucleus. It localises to the nucleolus. The protein localises to the nucleoplasm. Functionally, component of the NOP7 complex, which is required for maturation of the 25S and 5.8S ribosomal RNAs and formation of the 60S ribosome. This Kluyveromyces lactis (strain ATCC 8585 / CBS 2359 / DSM 70799 / NBRC 1267 / NRRL Y-1140 / WM37) (Yeast) protein is Pescadillo homolog.